The following is a 376-amino-acid chain: Cyclin-dependent kinase 9-B (376 aa).

The Protein kinase domain maps to 19-319 (YERLAKIGQG…SDEALNHDFF (301 aa)). ATP-binding positions include 25 to 33 (IGQGTFGEV) and Lys-48. Asp-153 functions as the Proton acceptor in the catalytic mechanism. The tract at residues 345-376 (PPRRRGGHMPQQPANQARNPAATNQSEFDRVF) is disordered. Residues 354-369 (PQQPANQARNPAATNQ) are compositionally biased toward low complexity.

This sequence belongs to the protein kinase superfamily. CMGC Ser/Thr protein kinase family. CDC2/CDKX subfamily. As to quaternary structure, associates with cyclin-T to form P-TEFb.

It is found in the nucleus. It carries out the reaction L-seryl-[protein] + ATP = O-phospho-L-seryl-[protein] + ADP + H(+). The catalysed reaction is L-threonyl-[protein] + ATP = O-phospho-L-threonyl-[protein] + ADP + H(+). The enzyme catalyses [DNA-directed RNA polymerase] + ATP = phospho-[DNA-directed RNA polymerase] + ADP + H(+). Functionally, member of the cyclin-dependent kinase pair (CDK9/cyclin-T) complex, also called positive transcription elongation factor B (P-TEFb), which is proposed to facilitate the transition from abortive to production elongation by phosphorylating the CTD (C-terminal domain) of the large subunit of RNA polymerase II (RNAP II) and SUPT5H. The chain is Cyclin-dependent kinase 9-B (cdk9-b) from Xenopus laevis (African clawed frog).